The primary structure comprises 75 residues: Putative primary metabolism protein HVA1 (75 aa).

Residues 1–13 (MSVQDKQGQNINV) are compositionally biased toward polar residues. 2 disordered regions span residues 1-24 (MSVQ…YRGG) and 40-75 (AAEK…DKQK).

Its function is as follows. May play a role in primary metabolism. The protein is Putative primary metabolism protein HVA1 of Cryptococcus neoformans var. grubii serotype A (strain H99 / ATCC 208821 / CBS 10515 / FGSC 9487) (Filobasidiella neoformans var. grubii).